Reading from the N-terminus, the 354-residue chain is Glycerol-3-phosphate dehydrogenase [NAD(+)], glycosomal (354 aa).

Residues 15–20 (GSGAFG), Phe-90, Lys-118, and Ala-150 each bind NAD(+). Lys-118 serves as a coordination point for substrate. Residue Lys-203 is the Proton acceptor of the active site. NAD(+) is bound by residues Arg-267 and Glu-293. 267–268 (RN) provides a ligand contact to substrate. Positions 352 to 354 (SKM) match the Microbody targeting signal motif.

The protein belongs to the NAD-dependent glycerol-3-phosphate dehydrogenase family.

It localises to the glycosome. It catalyses the reaction sn-glycerol 3-phosphate + NAD(+) = dihydroxyacetone phosphate + NADH + H(+). The protein is Glycerol-3-phosphate dehydrogenase [NAD(+)], glycosomal (GPD) of Trypanosoma brucei brucei.